We begin with the raw amino-acid sequence, 214 residues long: Adenylate kinase (214 aa).

10–15 is an ATP binding site; the sequence is GAGKGT. Residues 30 to 59 are NMP; the sequence is STGDMLRAAVKAGSELGLKAKEIMDAGKLV. AMP contacts are provided by residues threonine 31, arginine 36, 57–59, 85–88, and glutamine 92; these read KLV and GFPR. Residues 122 to 159 form an LID region; sequence GRRVHAASGRVYHVKFNPPKVEDKDDVTGEDLTIRKDD. ATP-binding positions include arginine 123 and 132–133; that span reads VY. Residues arginine 156 and arginine 167 each coordinate AMP. Arginine 200 contacts ATP.

The protein belongs to the adenylate kinase family. As to quaternary structure, monomer.

Its subcellular location is the cytoplasm. The enzyme catalyses AMP + ATP = 2 ADP. Its pathway is purine metabolism; AMP biosynthesis via salvage pathway; AMP from ADP: step 1/1. Functionally, catalyzes the reversible transfer of the terminal phosphate group between ATP and AMP. Plays an important role in cellular energy homeostasis and in adenine nucleotide metabolism. The chain is Adenylate kinase from Yersinia enterocolitica serotype O:8 / biotype 1B (strain NCTC 13174 / 8081).